Reading from the N-terminus, the 653-residue chain is Endoglin (653 aa).

The N-terminal stretch at 1–26 (MDRGVLPLPITLLFVIYSFVPTTGLA) is a signal peptide. The interval 27 to 47 (ERVGCDLQPVDPTRGEVTFTT) is OR1, N-terminal part. Residues 27-337 (ERVGCDLQPV…SSCGGVFQTT (311 aa)) are required for interaction with GDF2. At 27–581 (ERVGCDLQPV…IVSPDLSGKG (555 aa)) the chain is on the extracellular side. Cystine bridges form between C31–C209, C54–C184, C244–C330, C350–C382, C363–C442, C394–C412, and C493–C549. The segment at 48-201 (SQVSEGCVAQ…MGATLEWQPR (154 aa)) is OR2. N-linked (GlcNAc...) asparagine glycans are attached at residues N89, N135, and N266. The interval 202 to 330 (AQTPVQSCRL…SNVSLRASSC (129 aa)) is OR1, C-terminal part. The segment at 270–282 (QILTTGEYSVKIF) is essential for interaction with GDF2. N-linked (GlcNAc...) asparagine glycans are attached at residues N307 and N322. Positions 363 to 510 (CGNQVMTLAL…GDMVELIQSR (148 aa)) constitute a ZP domain. A helical membrane pass occupies residues 582 to 606 (LVLPSVLGITFGAFLIGALLTAALW). Over 607–653 (YIYSHTRGPSKREPVVAVAAPASSESSSTNHSIGSTQSTPCSTSSMA) the chain is Cytoplasmic. Over residues 624–634 (VAAPASSESSS) the composition is skewed to low complexity. The segment at 624 to 653 (VAAPASSESSSTNHSIGSTQSTPCSTSSMA) is disordered. Positions 635–653 (TNHSIGSTQSTPCSTSSMA) are enriched in polar residues. Phosphoserine; by TGFBR1 occurs at positions 641 and 644.

In terms of assembly, homodimer; disulfide-linked. Forms a heteromeric complex with the signaling receptors for transforming growth factor-beta: TGFBR1 and/or TGFBR2. Interacts with TGFB1. It is able to bind TGFB1 and TGFB2 with high affinity, but not TGFB3. Interacts with GDF2, forming a heterotetramer with a 2:2 stoichiometry. Interacts with ACVRL1. Can form a heteromeric complex with GDF2 and ACVRL1. Interacts with BMP10. Interacts with DYNLT4. Interacts with ARRB2. Detected on blood vessels (at protein level). Detected on adult pulmonary artery, capillaries supporting the heart muscle and lung alveolar capillary endothelial cells. Endoglin is restricted to endothelial cells in all tissues except bone marrow and is also found in stromal cells within the connective tissue of intestine, stomach, heart, skeletal muscle, uterus, ovary, oviduct, testis and thymus.

The protein localises to the cell membrane. Its function is as follows. Vascular endothelium glycoprotein that plays an important role in the regulation of angiogenesis. Required for normal structure and integrity of adult vasculature. Regulates the migration of vascular endothelial cells. Required for normal extraembryonic angiogenesis and for embryonic heart development. May regulate endothelial cell shape changes in response to blood flow, which drive vascular remodeling and establishment of normal vascular morphology during angiogenesis. May play a role in the binding of endothelial cells to integrins. Acts as a TGF-beta coreceptor and is involved in the TGF-beta/BMP signaling cascade that ultimately leads to the activation of SMAD transcription factors. Required for GDF2/BMP9 signaling through SMAD1 in endothelial cells and modulates TGFB1 signaling through SMAD3. This chain is Endoglin (Eng), found in Mus musculus (Mouse).